A 198-amino-acid chain; its full sequence is Holliday junction branch migration complex subunit RuvA (198 aa).

The interval 1–63 (MYDYIKGQLT…EDAQLLFGFH (63 aa)) is domain I. A domain II region spans residues 64 to 142 (SEEEKDVFLK…EAPKEESSKP (79 aa)). The flexible linker stretch occupies residues 143–147 (PKAKQ). The domain III stretch occupies residues 148–198 (QGNEQLDEAVEALLALGYKATELKKIRAFFEGTSETAEQYIKSALKMLMKG).

This sequence belongs to the RuvA family. Homotetramer. Forms an RuvA(8)-RuvB(12)-Holliday junction (HJ) complex. HJ DNA is sandwiched between 2 RuvA tetramers; dsDNA enters through RuvA and exits via RuvB. An RuvB hexamer assembles on each DNA strand where it exits the tetramer. Each RuvB hexamer is contacted by two RuvA subunits (via domain III) on 2 adjacent RuvB subunits; this complex drives branch migration. In the full resolvosome a probable DNA-RuvA(4)-RuvB(12)-RuvC(2) complex forms which resolves the HJ.

It localises to the cytoplasm. Functionally, the RuvA-RuvB-RuvC complex processes Holliday junction (HJ) DNA during genetic recombination and DNA repair, while the RuvA-RuvB complex plays an important role in the rescue of blocked DNA replication forks via replication fork reversal (RFR). RuvA specifically binds to HJ cruciform DNA, conferring on it an open structure. The RuvB hexamer acts as an ATP-dependent pump, pulling dsDNA into and through the RuvAB complex. HJ branch migration allows RuvC to scan DNA until it finds its consensus sequence, where it cleaves and resolves the cruciform DNA. The chain is Holliday junction branch migration complex subunit RuvA from Streptococcus equi subsp. equi (strain 4047).